A 134-amino-acid chain; its full sequence is Small ribosomal subunit protein uS8 (134 aa).

This sequence belongs to the universal ribosomal protein uS8 family. Part of the 30S ribosomal subunit. Contacts proteins S5 and S12.

One of the primary rRNA binding proteins, it binds directly to 16S rRNA central domain where it helps coordinate assembly of the platform of the 30S subunit. The sequence is that of Small ribosomal subunit protein uS8 from Thermosipho melanesiensis (strain DSM 12029 / CIP 104789 / BI429).